A 341-amino-acid chain; its full sequence is tRNA N6-adenosine threonylcarbamoyltransferase (341 aa).

Fe cation contacts are provided by histidine 110 and histidine 114. Substrate is bound by residues 133-137 (LVSGG), aspartate 166, glycine 179, and asparagine 276. Aspartate 304 provides a ligand contact to Fe cation.

The protein belongs to the KAE1 / TsaD family. It depends on Fe(2+) as a cofactor.

The protein localises to the cytoplasm. The catalysed reaction is L-threonylcarbamoyladenylate + adenosine(37) in tRNA = N(6)-L-threonylcarbamoyladenosine(37) in tRNA + AMP + H(+). Its function is as follows. Required for the formation of a threonylcarbamoyl group on adenosine at position 37 (t(6)A37) in tRNAs that read codons beginning with adenine. Is involved in the transfer of the threonylcarbamoyl moiety of threonylcarbamoyl-AMP (TC-AMP) to the N6 group of A37, together with TsaE and TsaB. TsaD likely plays a direct catalytic role in this reaction. The sequence is that of tRNA N6-adenosine threonylcarbamoyltransferase from Saccharophagus degradans (strain 2-40 / ATCC 43961 / DSM 17024).